Reading from the N-terminus, the 188-residue chain is Ribosome-recycling factor (188 aa).

The protein belongs to the RRF family.

It is found in the cytoplasm. Its function is as follows. Responsible for the release of ribosomes from messenger RNA at the termination of protein biosynthesis. May increase the efficiency of translation by recycling ribosomes from one round of translation to another. This Anaeromyxobacter dehalogenans (strain 2CP-C) protein is Ribosome-recycling factor.